We begin with the raw amino-acid sequence, 155 residues long: Leader peptidase HopD (155 aa).

This sequence belongs to the peptidase A24 family.

This chain is Leader peptidase HopD (hopD), found in Escherichia coli.